A 561-amino-acid chain; its full sequence is ATP-dependent RNA helicase MRH4, mitochondrial (561 aa).

The N-terminal 26 residues, 1-26 (MSLFFKPVISPQWSFPVLLKIGVRSY), are a transit peptide targeting the mitochondrion. Residues 29–72 (GPRTKHKGNSPLASVPTGSSNKNRKQKAKGKKGNKKNDPDQAFN) are disordered. Residues 50 to 62 (KNRKQKAKGKKGN) show a composition bias toward basic residues. Positions 98 to 129 (SNFDQLLILPPVRDAVKEIISKESLKLQDSRK) match the Q motif motif. Residues 131–319 (TSENIIPSPI…NINHLIFCSA (189 aa)) form the Helicase ATP-binding domain. ATP is bound at residue 144-151 (AIKRISKN). Residues 267-270 (SIRM) carry the DEAD box motif. In terms of domain architecture, Helicase C-terminal spans 350–539 (ALDFKVINSA…KQGGRVFMLT (190 aa)).

Belongs to the DEAD box helicase family. MRH4 subfamily.

The protein localises to the mitochondrion. The enzyme catalyses ATP + H2O = ADP + phosphate + H(+). Functionally, ATP-binding RNA helicase involved in mitochondrial RNA metabolism. Required for maintenance of mitochondrial DNA. This chain is ATP-dependent RNA helicase MRH4, mitochondrial (MRH4), found in Saccharomyces cerevisiae (strain YJM789) (Baker's yeast).